Reading from the N-terminus, the 80-residue chain is RNA-binding protein KhpA (80 aa).

Positions 33–80 (GRTVEVHVHPDDLGKVIGRGGRTATALRTLVAGIGGRGIRVDVVDTDQ) constitute a KH domain.

This sequence belongs to the KhpA RNA-binding protein family.

It is found in the cytoplasm. Its function is as follows. A probable RNA-binding protein. This Mycobacterium bovis (strain ATCC BAA-935 / AF2122/97) protein is RNA-binding protein KhpA.